We begin with the raw amino-acid sequence, 131 residues long: Leptin receptor overlapping transcript-like 1 (131 aa).

Helical transmembrane passes span 7-27 (LISLSFGGAIGLMFLMLGCAL), 32-52 (KYWPLFVLFFYILSPIPYCIA), 69-89 (LAIFLTTGIVVSAFGLPIVFA), and 100-120 (ALVLTGNTVIFATILGFFLVF).

It belongs to the OB-RGRP/VPS55 family. As to quaternary structure, interacts with RAB13. In terms of tissue distribution, widely expressed, with highest expression in heart, testis, adrenal gland, thymus, and spleen, and lowest expression in lung and skeletal muscle.

It localises to the membrane. Functionally, negatively regulates growth hormone (GH) receptor cell surface expression in liver. May play a role in liver resistance to GH during periods of reduced nutrient availability. This is Leptin receptor overlapping transcript-like 1 (LEPROTL1) from Homo sapiens (Human).